Reading from the N-terminus, the 275-residue chain is 4-hydroxy-3-methylbut-2-enyl diphosphate reductase (275 aa).

Residue cysteine 12 coordinates [4Fe-4S] cluster. Histidine 36 and histidine 70 together coordinate (2E)-4-hydroxy-3-methylbut-2-enyl diphosphate. The dimethylallyl diphosphate site is built by histidine 36 and histidine 70. Isopentenyl diphosphate is bound by residues histidine 36 and histidine 70. [4Fe-4S] cluster is bound at residue cysteine 92. A (2E)-4-hydroxy-3-methylbut-2-enyl diphosphate-binding site is contributed by histidine 120. Dimethylallyl diphosphate is bound at residue histidine 120. Histidine 120 is a binding site for isopentenyl diphosphate. Glutamate 122 serves as the catalytic Proton donor. Threonine 157 contributes to the (2E)-4-hydroxy-3-methylbut-2-enyl diphosphate binding site. Cysteine 185 serves as a coordination point for [4Fe-4S] cluster. (2E)-4-hydroxy-3-methylbut-2-enyl diphosphate-binding residues include serine 213, serine 214, asparagine 215, and serine 257. Serine 213, serine 214, asparagine 215, and serine 257 together coordinate dimethylallyl diphosphate. Positions 213, 214, 215, and 257 each coordinate isopentenyl diphosphate.

Belongs to the IspH family. [4Fe-4S] cluster serves as cofactor.

It catalyses the reaction isopentenyl diphosphate + 2 oxidized [2Fe-2S]-[ferredoxin] + H2O = (2E)-4-hydroxy-3-methylbut-2-enyl diphosphate + 2 reduced [2Fe-2S]-[ferredoxin] + 2 H(+). The catalysed reaction is dimethylallyl diphosphate + 2 oxidized [2Fe-2S]-[ferredoxin] + H2O = (2E)-4-hydroxy-3-methylbut-2-enyl diphosphate + 2 reduced [2Fe-2S]-[ferredoxin] + 2 H(+). It participates in isoprenoid biosynthesis; dimethylallyl diphosphate biosynthesis; dimethylallyl diphosphate from (2E)-4-hydroxy-3-methylbutenyl diphosphate: step 1/1. The protein operates within isoprenoid biosynthesis; isopentenyl diphosphate biosynthesis via DXP pathway; isopentenyl diphosphate from 1-deoxy-D-xylulose 5-phosphate: step 6/6. Its function is as follows. Catalyzes the conversion of 1-hydroxy-2-methyl-2-(E)-butenyl 4-diphosphate (HMBPP) into a mixture of isopentenyl diphosphate (IPP) and dimethylallyl diphosphate (DMAPP). Acts in the terminal step of the DOXP/MEP pathway for isoprenoid precursor biosynthesis. This chain is 4-hydroxy-3-methylbut-2-enyl diphosphate reductase, found in Nitratiruptor sp. (strain SB155-2).